A 249-amino-acid polypeptide reads, in one-letter code: FMN reductase [NAD(P)H] (249 aa).

Residues 11 to 15 (HRSIR), Gln67, 134 to 136 (PIG), and 173 to 175 (KPR) each bind FMN.

This sequence belongs to the flavin oxidoreductase frp family. In terms of assembly, homodimer.

It carries out the reaction FMNH2 + NADP(+) = FMN + NADPH + 2 H(+). The catalysed reaction is FMNH2 + NAD(+) = FMN + NADH + 2 H(+). With respect to regulation, FMN is a competitive inhibitor of NADH, and therefore leads to the preferential utilization of NADPH. Functionally, reduces FMNH(2) to FMN, with NADH or NADPH as reductant. It also reduces nitroaromatic compounds, quinones, chromates and azo dyes. It could supply the reduced form of FMN to luciferase-like protein and contribute to the degradation of aromatic compounds. This chain is FMN reductase [NAD(P)H] (nfrA2), found in Bacillus subtilis (strain 168).